The primary structure comprises 457 residues: Siroheme synthase (457 aa).

Residues 1–204 (MDHLPIFCQL…NDQKAITETT (204 aa)) are precorrin-2 dehydrogenase /sirohydrochlorin ferrochelatase. NAD(+) is bound by residues 22-23 (DV) and 43-44 (LA). Residue S128 is modified to Phosphoserine. Residues 216 to 457 (GEVVLVGAGP…RDKLNWFSNH (242 aa)) form a uroporphyrinogen-III C-methyltransferase region. Residue P225 participates in S-adenosyl-L-methionine binding. Residue D248 is the Proton acceptor of the active site. K270 functions as the Proton donor in the catalytic mechanism. S-adenosyl-L-methionine contacts are provided by residues 301–303 (GGD), I306, 331–332 (TA), M382, and G411.

This sequence in the N-terminal section; belongs to the precorrin-2 dehydrogenase / sirohydrochlorin ferrochelatase family. The protein in the C-terminal section; belongs to the precorrin methyltransferase family.

It carries out the reaction uroporphyrinogen III + 2 S-adenosyl-L-methionine = precorrin-2 + 2 S-adenosyl-L-homocysteine + H(+). It catalyses the reaction precorrin-2 + NAD(+) = sirohydrochlorin + NADH + 2 H(+). The enzyme catalyses siroheme + 2 H(+) = sirohydrochlorin + Fe(2+). The protein operates within cofactor biosynthesis; adenosylcobalamin biosynthesis; precorrin-2 from uroporphyrinogen III: step 1/1. It participates in cofactor biosynthesis; adenosylcobalamin biosynthesis; sirohydrochlorin from precorrin-2: step 1/1. Its pathway is porphyrin-containing compound metabolism; siroheme biosynthesis; precorrin-2 from uroporphyrinogen III: step 1/1. It functions in the pathway porphyrin-containing compound metabolism; siroheme biosynthesis; siroheme from sirohydrochlorin: step 1/1. The protein operates within porphyrin-containing compound metabolism; siroheme biosynthesis; sirohydrochlorin from precorrin-2: step 1/1. Functionally, multifunctional enzyme that catalyzes the SAM-dependent methylations of uroporphyrinogen III at position C-2 and C-7 to form precorrin-2 via precorrin-1. Then it catalyzes the NAD-dependent ring dehydrogenation of precorrin-2 to yield sirohydrochlorin. Finally, it catalyzes the ferrochelation of sirohydrochlorin to yield siroheme. The chain is Siroheme synthase from Shigella flexneri.